Reading from the N-terminus, the 55-residue chain is uncharacterized protein (55 aa).

Positions 1 to 22 (MPALKSHVRPNSAAPARRQPWP) are disordered.

This is an uncharacterized protein from Rhodobacter capsulatus (Rhodopseudomonas capsulata).